The sequence spans 93 residues: Small ribosomal subunit protein bS20 (93 aa).

It belongs to the bacterial ribosomal protein bS20 family.

Binds directly to 16S ribosomal RNA. The polypeptide is Small ribosomal subunit protein bS20 (Hydrogenobaculum sp. (strain Y04AAS1)).